A 105-amino-acid chain; its full sequence is Chloroacetanilide N-alkylformylase 2, ferredoxin component (105 aa).

The 104-residue stretch at proline 2 to aspartate 105 folds into the 2Fe-2S ferredoxin-type domain. Positions 40, 46, 49, and 86 each coordinate [2Fe-2S] cluster.

This sequence belongs to the adrenodoxin/putidaredoxin family. In terms of assembly, the chloroacetanilide N-alkylformylase multicomponent enzyme system is composed of an oxygenase component (CndA) and an electron transfer component formed by a ferredoxin reductase (CndC1) and a ferredoxin (CndB1). In vitro, chloroacetanilide N-alkylformylase assays in which CndB1 is substituted for CndB2 demonstrate that the two enzymes possess nearly identical activities. [2Fe-2S] cluster serves as cofactor.

Its function is as follows. Component of the chloroacetanilide N-alkylformylase multicomponent enzyme system involved in the degradation of chloroacetanilide herbicides (N-alkoxyalkyl-N-chloroacetyl-substituted aniline derivatives). In vitro, functions as an intermediate electron transfer protein. The polypeptide is Chloroacetanilide N-alkylformylase 2, ferredoxin component (Rhizorhabdus wittichii (strain DC-6 / KACC 16600) (Sphingomonas wittichii)).